We begin with the raw amino-acid sequence, 605 residues long: Proline--tRNA ligase (605 aa).

It belongs to the class-II aminoacyl-tRNA synthetase family. ProS type 1 subfamily. In terms of assembly, homodimer.

The protein localises to the cytoplasm. It catalyses the reaction tRNA(Pro) + L-proline + ATP = L-prolyl-tRNA(Pro) + AMP + diphosphate. Catalyzes the attachment of proline to tRNA(Pro) in a two-step reaction: proline is first activated by ATP to form Pro-AMP and then transferred to the acceptor end of tRNA(Pro). As ProRS can inadvertently accommodate and process non-cognate amino acids such as alanine and cysteine, to avoid such errors it has two additional distinct editing activities against alanine. One activity is designated as 'pretransfer' editing and involves the tRNA(Pro)-independent hydrolysis of activated Ala-AMP. The other activity is designated 'posttransfer' editing and involves deacylation of mischarged Ala-tRNA(Pro). The misacylated Cys-tRNA(Pro) is not edited by ProRS. In Bifidobacterium adolescentis (strain ATCC 15703 / DSM 20083 / NCTC 11814 / E194a), this protein is Proline--tRNA ligase.